Reading from the N-terminus, the 332-residue chain is Glycerol-3-phosphate dehydrogenase [NAD(P)+] (332 aa).

NADPH contacts are provided by Trp13, Arg33, and Lys105. Sn-glycerol 3-phosphate-binding residues include Lys105, Gly134, and Ser136. Ala138 lines the NADPH pocket. Lys189, Asp242, Ser252, Arg253, and Asn254 together coordinate sn-glycerol 3-phosphate. Lys189 functions as the Proton acceptor in the catalytic mechanism. Arg253 is a binding site for NADPH. Residue Glu279 coordinates NADPH.

The protein belongs to the NAD-dependent glycerol-3-phosphate dehydrogenase family.

The protein resides in the cytoplasm. It catalyses the reaction sn-glycerol 3-phosphate + NAD(+) = dihydroxyacetone phosphate + NADH + H(+). It carries out the reaction sn-glycerol 3-phosphate + NADP(+) = dihydroxyacetone phosphate + NADPH + H(+). It functions in the pathway membrane lipid metabolism; glycerophospholipid metabolism. Catalyzes the reduction of the glycolytic intermediate dihydroxyacetone phosphate (DHAP) to sn-glycerol 3-phosphate (G3P), the key precursor for phospholipid synthesis. The chain is Glycerol-3-phosphate dehydrogenase [NAD(P)+] from Halorhodospira halophila (strain DSM 244 / SL1) (Ectothiorhodospira halophila (strain DSM 244 / SL1)).